Here is a 176-residue protein sequence, read N- to C-terminus: Interleukin-20 (176 aa).

The first 24 residues, 1–24 (MKGFGLAFGLFSAVGFLLWTPLTG), serve as a signal peptide directing secretion. 3 disulfide bridges follow: C33/C126, C80/C132, and C81/C134.

The protein belongs to the IL-10 family. Forms a 1:1:1 heterotrimeric complex with its primary high-affinity heterodimeric receptor IL20RA/IL20RB.

It is found in the secreted. Functionally, pro-inflammatory and angiogenic cytokine mainly secreted by monocytes and skin keratinocytes that plays crucial roles in immune responses, regulation of inflammatory responses, hemopoiesis, as well as epidermal cell and keratinocyte differentiation. Enhances tissue remodeling and wound-healing activities and restores the homeostasis of epithelial layers during infection and inflammatory responses to maintain tissue integrity. Affects multiple actin-mediated functions in activated neutrophils leading to inhibition of phagocytosis, granule exocytosis, and migration. Exert its effects via the type I IL-20 receptor complex consisting of IL20RA and IL20RB. Alternatively, can mediate its activity through a second receptor complex called type II IL-20 receptor complex composed of IL22RA1 and IL20RB. Acts as an arteriogenic and vascular remodeling factory by activating a range of signaling processes including phosphorylations of JAK2 and STAT5 as well as activation of the serine and threonine kinases AKT and ERK1/2. Alternatively, can activate STAT3 phosphorylation and transcriptional activity in a JAK2, ERK1/2 and p38 MAPK-dependent manner in keratinocytes. In Mus musculus (Mouse), this protein is Interleukin-20 (Il20).